The chain runs to 354 residues: Uroporphyrinogen decarboxylase (354 aa).

Substrate-binding positions include R27 to R31, D77, Y154, T209, and H327.

Belongs to the uroporphyrinogen decarboxylase family. In terms of assembly, homodimer.

Its subcellular location is the cytoplasm. The enzyme catalyses uroporphyrinogen III + 4 H(+) = coproporphyrinogen III + 4 CO2. It participates in porphyrin-containing compound metabolism; protoporphyrin-IX biosynthesis; coproporphyrinogen-III from 5-aminolevulinate: step 4/4. Functionally, catalyzes the decarboxylation of four acetate groups of uroporphyrinogen-III to yield coproporphyrinogen-III. In Escherichia coli O81 (strain ED1a), this protein is Uroporphyrinogen decarboxylase.